A 353-amino-acid polypeptide reads, in one-letter code: Photosystem II D2 protein (353 aa).

Thr-2 carries the N-acetylthreonine modification. Thr-2 bears the Phosphothreonine mark. A helical membrane pass occupies residues 41-61 (CAYFSLGGWLTGTTFVTSWYT). His-118 is a chlorophyll a binding site. A helical membrane pass occupies residues 125 to 141 (GFMLRQFELARSVQLRP). Pheophytin a-binding residues include Gln-130 and Asn-143. A helical transmembrane segment spans residues 153 to 166 (VFVSVFLIYPLGQS). Position 198 (His-198) interacts with chlorophyll a. Residues 208-228 (AALLCAIHGATVENTLFEDGD) traverse the membrane as a helical segment. His-215 and Phe-262 together coordinate a plastoquinone. Residue His-215 coordinates Fe cation. His-269 serves as a coordination point for Fe cation. A helical membrane pass occupies residues 279–295 (GLWMSAIGVVGLALNLR).

This sequence belongs to the reaction center PufL/M/PsbA/D family. In terms of assembly, PSII is composed of 1 copy each of membrane proteins PsbA, PsbB, PsbC, PsbD, PsbE, PsbF, PsbH, PsbI, PsbJ, PsbK, PsbL, PsbM, PsbT, PsbX, PsbY, PsbZ, Psb30/Ycf12, at least 3 peripheral proteins of the oxygen-evolving complex and a large number of cofactors. It forms dimeric complexes. Requires The D1/D2 heterodimer binds P680, chlorophylls that are the primary electron donor of PSII, and subsequent electron acceptors. It shares a non-heme iron and each subunit binds pheophytin, quinone, additional chlorophylls, carotenoids and lipids. There is also a Cl(-1) ion associated with D1 and D2, which is required for oxygen evolution. The PSII complex binds additional chlorophylls, carotenoids and specific lipids. as cofactor.

The protein resides in the plastid. It localises to the chloroplast thylakoid membrane. The enzyme catalyses 2 a plastoquinone + 4 hnu + 2 H2O = 2 a plastoquinol + O2. Functionally, photosystem II (PSII) is a light-driven water:plastoquinone oxidoreductase that uses light energy to abstract electrons from H(2)O, generating O(2) and a proton gradient subsequently used for ATP formation. It consists of a core antenna complex that captures photons, and an electron transfer chain that converts photonic excitation into a charge separation. The D1/D2 (PsbA/PsbD) reaction center heterodimer binds P680, the primary electron donor of PSII as well as several subsequent electron acceptors. D2 is needed for assembly of a stable PSII complex. The sequence is that of Photosystem II D2 protein from Chara vulgaris (Common stonewort).